The primary structure comprises 112 residues: S-adenosylmethionine decarboxylase proenzyme (112 aa).

The active-site Schiff-base intermediate with substrate; via pyruvic acid is Ser-62. Ser-62 is modified (pyruvic acid (Ser); by autocatalysis). His-67 functions as the Proton acceptor; for processing activity in the catalytic mechanism. The active-site Proton donor; for catalytic activity is the Cys-82.

This sequence belongs to the prokaryotic AdoMetDC family. Type 1 subfamily. As to quaternary structure, heterotetramer of two alpha and two beta chains arranged as a dimer of alpha/beta heterodimers. Pyruvate is required as a cofactor. Is synthesized initially as an inactive proenzyme. Formation of the active enzyme involves a self-maturation process in which the active site pyruvoyl group is generated from an internal serine residue via an autocatalytic post-translational modification. Two non-identical subunits are generated from the proenzyme in this reaction, and the pyruvate is formed at the N-terminus of the alpha chain, which is derived from the carboxyl end of the proenzyme. The post-translation cleavage follows an unusual pathway, termed non-hydrolytic serinolysis, in which the side chain hydroxyl group of the serine supplies its oxygen atom to form the C-terminus of the beta chain, while the remainder of the serine residue undergoes an oxidative deamination to produce ammonia and the pyruvoyl group blocking the N-terminus of the alpha chain.

The catalysed reaction is S-adenosyl-L-methionine + H(+) = S-adenosyl 3-(methylsulfanyl)propylamine + CO2. Its pathway is amine and polyamine biosynthesis; S-adenosylmethioninamine biosynthesis; S-adenosylmethioninamine from S-adenosyl-L-methionine: step 1/1. Functionally, catalyzes the decarboxylation of S-adenosylmethionine to S-adenosylmethioninamine (dcAdoMet), the propylamine donor required for the synthesis of the polyamines spermine and spermidine from the diamine putrescine. This is S-adenosylmethionine decarboxylase proenzyme from Archaeoglobus fulgidus (strain ATCC 49558 / DSM 4304 / JCM 9628 / NBRC 100126 / VC-16).